The chain runs to 377 residues: MSEQDSSSPKYMRFLLGNFTSAEMVTDGNFLIYCIEMGLLVIGVLENIFMIGAVFSTSCLHLNLRILICNCCLGFILMAVGRAMIAVPLCIAHLRDVDISSHAWCFIANAVHHSSADSVCLSFVFIMLERTAGTIWSKDYEKTKIHIFPCIFAFLQWFIPMFMILGNFLDRANRMEHFLLYPHLPCQIEYLTPTMFMITIFIIVIGFIASVGGITIVYNKNIKKYNTRDIWFNTVNLSERYQITENIRSTHLLFPLLALMLIFSTLSVSVLIYGGYWVSVMTKEPARFEEVVKWFGRGGEAAQLFDIITAIYTISFPICAFICHPNLFRFLRKFIGWNSYAVRPSNLNEIGGFEMSTAPIRTQTEFHFQELSRQWNT.

Residues 1-34 (MSEQDSSSPKYMRFLLGNFTSAEMVTDGNFLIYC) are Extracellular-facing. Asparagine 18 is a glycosylation site (N-linked (GlcNAc...) asparagine). A helical membrane pass occupies residues 35–55 (IEMGLLVIGVLENIFMIGAVF). Residues 56 to 71 (STSCLHLNLRILICNC) lie on the Cytoplasmic side of the membrane. A helical transmembrane segment spans residues 72-92 (CLGFILMAVGRAMIAVPLCIA). Topologically, residues 93 to 105 (HLRDVDISSHAWC) are extracellular. A helical membrane pass occupies residues 106–126 (FIANAVHHSSADSVCLSFVFI). The Cytoplasmic segment spans residues 127 to 144 (MLERTAGTIWSKDYEKTK). The helical transmembrane segment at 145-165 (IHIFPCIFAFLQWFIPMFMIL) threads the bilayer. The Extracellular segment spans residues 166–195 (GNFLDRANRMEHFLLYPHLPCQIEYLTPTM). A helical membrane pass occupies residues 196-216 (FMITIFIIVIGFIASVGGITI). Residues 217 to 251 (VYNKNIKKYNTRDIWFNTVNLSERYQITENIRSTH) are Cytoplasmic-facing. Residues 252-272 (LLFPLLALMLIFSTLSVSVLI) traverse the membrane as a helical segment. Residues 273–303 (YGGYWVSVMTKEPARFEEVVKWFGRGGEAAQ) lie on the Extracellular side of the membrane. A helical transmembrane segment spans residues 304-324 (LFDIITAIYTISFPICAFICH). Residues 325–377 (PNLFRFLRKFIGWNSYAVRPSNLNEIGGFEMSTAPIRTQTEFHFQELSRQWNT) lie on the Cytoplasmic side of the membrane.

This sequence belongs to the G-protein coupled receptor 1 family.

The protein resides in the cell membrane. The protein is Probable G-protein coupled receptor F27E5.8 of Caenorhabditis elegans.